Reading from the N-terminus, the 108-residue chain is Putative transmembrane protein ORF108 (108 aa).

3 helical membrane passes run 11–31 (FIMG…SSII), 33–53 (IAMT…TVHF), and 69–89 (VGFL…LLII).

It localises to the host membrane. The protein is Putative transmembrane protein ORF108 of Acidianus hospitalis (AFV-1).